The sequence spans 503 residues: Pre-glycoprotein polyprotein GP complex (503 aa).

Residue Gly-2 is the site of N-myristoyl glycine; by host attachment. Over 2 to 17 (GQIVTLIQSIPEVLQE) the chain is Extracellular. A helical transmembrane segment spans residues 18 to 33 (VFNVALIIVSVLCIVK). The Cytoplasmic segment spans residues 34–58 (GFVNLMRCGLFQLVTFLILSGRSCD). A Zn(2+)-binding site is contributed by Cys-57. At 59–446 (SMMIDRRHNL…QGKTPLALTD (388 aa)) the chain is on the extracellular side. Cystine bridges form between Cys-86–Cys-248, Cys-293–Cys-306, Cys-315–Cys-324, and Cys-378–Cys-399. N-linked (GlcNAc...) asparagine; by host glycans are attached at residues Asn-89, Asn-111, Asn-181, and Asn-241. N-linked (GlcNAc...) asparagine; by host glycans are attached at residues Asn-379, Asn-387, Asn-404, and Asn-409. The helical transmembrane segment at 447-467 (ICFWSLVFYTITVFLHIVGIP) threads the bilayer. The Cytoplasmic segment spans residues 468–503 (THRHIIGDGCPKPHRITRNSLCSCGYYKYQRNLTNG). Zn(2+) contacts are provided by His-469, His-471, Cys-477, His-481, Cys-489, and Cys-491.

The protein belongs to the arenaviridae GPC protein family. As to quaternary structure, interacts with glycoprotein G2. Part of the GP complex (GP-C) together with glycoprotein G1 and glycoprotein G2. The GP-complex interacts with protein Z, which interacts with ribonucleocapsid; these interactions may induce virion budding. In terms of assembly, homotrimer; disulfide-linked. In pre-fusion state, G1 homotrimers bind G2 homotrimers via ionic interactions. Part of the GP complex (GP-C) together with glycoprotein G2 and the stable signal peptide. The GP-complex interacts with protein Z, which interacts with ribonucleocapsid; these interactions may induce virion budding. Homotrimer. Interacts with the stable signal peptide. In pre-fusion state, G2 homotrimers bind G1 homotrimers via ionic interactions. Part of the GP complex (GP-C) together with glycoprotein G1 and the stable signal peptide. Acidification in the endosome triggers rearrangements, which ultimately leads to a 6 helix bundle formed by the two heptad repeat domains (HR1 and HR2) in post-fusion state. The GP-complex interacts with protein Z, which interacts with ribonucleocapsid; these interactions may induce virion budding. Post-translationally, specific enzymatic cleavages in vivo yield mature proteins. GP-C polyprotein is cleaved in the endoplasmic reticulum by the host protease MBTPS1. Only cleaved glycoprotein is incorporated into virions. The SSP remains stably associated with the GP complex following cleavage by signal peptidase and plays crucial roles in the trafficking of GP through the secretory pathway. In terms of processing, myristoylation is necessary for GP2-mediated fusion activity.

It localises to the virion membrane. It is found in the host endoplasmic reticulum membrane. Its subcellular location is the host Golgi apparatus membrane. The protein localises to the host cell membrane. In terms of biological role, functions as a cleaved signal peptide that is retained as the third component of the GP complex (GP-C). Helps to stabilize the spike complex in its native conformation. The SSP is required for efficient glycoprotein expression, post-translational maturation cleavage of G1 and G2, glycoprotein transport to the cell surface plasma membrane, formation of infectious virus particles, and acid pH-dependent glycoprotein-mediated cell fusion. Functionally, forms the virion spikes together with glycoprotein G2. The glycoprotein spike trimers are connected to the underlying matrix. Interacts with the host receptor leading to virus endocytosis. Its function is as follows. Forms the virion spikes together with glycoprotein G1. The glycoprotein spike trimers are connected to the underlying matrix. Class I viral fusion protein that directs fusion of viral and host endosomal membranes, leading to delivery of the nucleocapsid into the cytoplasm. Membrane fusion is mediated by irreversible conformational changes induced by acidification. In Cavia cutleri (Guinea pig), this protein is Pre-glycoprotein polyprotein GP complex.